A 444-amino-acid chain; its full sequence is Trigger factor (444 aa).

The 86-residue stretch at 165-250 folds into the PPIase FKBP-type domain; that stretch reads GDFAKFDFEG…LHEIQELKIP (86 aa).

Belongs to the FKBP-type PPIase family. Tig subfamily.

It localises to the cytoplasm. It carries out the reaction [protein]-peptidylproline (omega=180) = [protein]-peptidylproline (omega=0). Functionally, involved in protein export. Acts as a chaperone by maintaining the newly synthesized protein in an open conformation. Functions as a peptidyl-prolyl cis-trans isomerase. The chain is Trigger factor from Campylobacter jejuni subsp. jejuni serotype O:6 (strain 81116 / NCTC 11828).